A 547-amino-acid polypeptide reads, in one-letter code: Glucose-6-phosphate isomerase (547 aa).

The active-site Proton donor is Glu-351. Catalysis depends on residues His-382 and Lys-510.

Belongs to the GPI family.

The protein resides in the cytoplasm. It catalyses the reaction alpha-D-glucose 6-phosphate = beta-D-fructose 6-phosphate. Its pathway is carbohydrate biosynthesis; gluconeogenesis. It functions in the pathway carbohydrate degradation; glycolysis; D-glyceraldehyde 3-phosphate and glycerone phosphate from D-glucose: step 2/4. Catalyzes the reversible isomerization of glucose-6-phosphate to fructose-6-phosphate. The sequence is that of Glucose-6-phosphate isomerase from Beijerinckia indica subsp. indica (strain ATCC 9039 / DSM 1715 / NCIMB 8712).